Consider the following 162-residue polypeptide: ATP synthase subunit b', chloroplastic (162 aa).

The helical transmembrane segment at 26 to 46 (ATLPLQALQFILLTVLLTFIF) threads the bilayer.

This sequence belongs to the ATPase B chain family. In terms of assembly, F-type ATPases have 2 components, F(1) - the catalytic core - and F(0) - the membrane proton channel. F(1) has five subunits: alpha(3), beta(3), gamma(1), delta(1), epsilon(1). F(0) has four main subunits: a(1), b(1), b'(1) and c(10-14). The alpha and beta chains form an alternating ring which encloses part of the gamma chain. F(1) is attached to F(0) by a central stalk formed by the gamma and epsilon chains, while a peripheral stalk is formed by the delta, b and b' chains.

Its subcellular location is the plastid. The protein localises to the chloroplast thylakoid membrane. F(1)F(0) ATP synthase produces ATP from ADP in the presence of a proton or sodium gradient. F-type ATPases consist of two structural domains, F(1) containing the extramembraneous catalytic core and F(0) containing the membrane proton channel, linked together by a central stalk and a peripheral stalk. During catalysis, ATP synthesis in the catalytic domain of F(1) is coupled via a rotary mechanism of the central stalk subunits to proton translocation. Functionally, component of the F(0) channel, it forms part of the peripheral stalk, linking F(1) to F(0). The b'-subunit is a diverged and duplicated form of b found in plants and photosynthetic bacteria. The sequence is that of ATP synthase subunit b', chloroplastic from Emiliania huxleyi (Coccolithophore).